We begin with the raw amino-acid sequence, 97 residues long: Peptide YY (97 aa).

Positions 1–28 (MMSGRRSWPAMATVLLTLLVCLGELVDA) are cleaved as a signal peptide. Serine 41 carries the post-translational modification Phosphoserine. A Phenylalanine amide modification is found at phenylalanine 64. Residues 68–97 (DFSEALLSILLFPDREDPPVKSRPEGAYLW) constitute a propeptide that is removed on maturation.

Belongs to the NPY family.

The protein resides in the secreted. This gut peptide inhibits exocrine pancreatic secretion, has a vasoconstrictory action and inhibitis jejunal and colonic mobility. In Bos taurus (Bovine), this protein is Peptide YY (PYY).